Reading from the N-terminus, the 349-residue chain is MDSVALMPLLLLLLLQPPPATPAPPVRDPFALQLGDTQNCQLRCRDRYPKPQLAQEELGEDPIQSRRAKAYDRAVLTSACERGCRLFSICRFVARSSKPNATQAECEAACVEAYVKETEQQACSEGCWSQNPEPEPEPELEQKRKVLEAPSGALSLLDLFSTLCNDLVNSAQGFVSSTWTYYLQTDNGKVVVFQTQPVVESLGHEGARLQRVEVTWRGSHPEALEVHVDPVGPLDKVRKAKIRVKTSSKAKVESDELQDNDFLSCMSRRSGLPRWILACCLFLSVLVMLWLSCSTLVTAPGQHLKFQPLTLEQHKGYMVEPEWSLYPPPSHAYADSPPPYKLKLDLTKL.

The first 22 residues, 1 to 22, serve as a signal peptide directing secretion; sequence MDSVALMPLLLLLLLQPPPATP. An N-linked (GlcNAc...) asparagine glycan is attached at Asn-100. Residues 276–296 form a helical membrane-spanning segment; it reads ILACCLFLSVLVMLWLSCSTL. Residues 347–349 carry the Microbody targeting signal motif; that stretch reads TKL.

Belongs to the TMEM59 family.

Its subcellular location is the golgi apparatus membrane. Its function is as follows. Modulates the O-glycosylation and complex N-glycosylation steps occurring during the Golgi maturation of APP. Inhibits APP transport to the cell surface and further shedding. The protein is Transmembrane protein 59-like (TMEM59L) of Bos taurus (Bovine).